Reading from the N-terminus, the 232-residue chain is MIPTSFPPREEIARLTARMLLEIEAVHFRPQEPFTLASGLPSPTYIDCRKLISYPRIRSTLMDFMAVTLLRDAGFEAFDNIAGGETAGIPFAALVAERLGLPMTYVRKKPKGYGRNARIEGVMTEGQRVLLVEDLTTDGGSKLSFVDAIRETGASCAHTAVIFYYGIFPETIGRLQAHGVTLHHLCTWWDVLAEARASGAFDAGTLAEVESFLSNPRDWQDARKPADPTKSL.

5-phospho-alpha-D-ribose 1-diphosphate contacts are provided by residues arginine 107, lysine 108, lysine 111, and 133–141 (EDLTTDGGS). Threonine 137 contacts orotate.

The protein belongs to the purine/pyrimidine phosphoribosyltransferase family. PyrE subfamily. In terms of assembly, homodimer. Mg(2+) is required as a cofactor.

The enzyme catalyses orotidine 5'-phosphate + diphosphate = orotate + 5-phospho-alpha-D-ribose 1-diphosphate. It participates in pyrimidine metabolism; UMP biosynthesis via de novo pathway; UMP from orotate: step 1/2. Its function is as follows. Catalyzes the transfer of a ribosyl phosphate group from 5-phosphoribose 1-diphosphate to orotate, leading to the formation of orotidine monophosphate (OMP). This Cereibacter sphaeroides (strain ATCC 17029 / ATH 2.4.9) (Rhodobacter sphaeroides) protein is Orotate phosphoribosyltransferase.